A 346-amino-acid chain; its full sequence is Glucose-6-phosphatase 3 (346 aa).

Residues 1–24 (MESTLGAGIAMAEALQNQLPWLEN) lie on the Lumenal side of the membrane. The helical transmembrane segment at 25 to 45 (VWLWVTFLGDPKSLFLFYFPA) threads the bilayer. Over 46 to 54 (AYYASRRVG) the chain is Cytoplasmic. Residues 55–75 (IAVLWISLITEWLNLVFKWFL) traverse the membrane as a helical segment. Residues 76-108 (FGDRPFWWVHESGYYSQAPAQVHQFPSSCETGP) lie on the Lumenal side of the membrane. A substrate-binding site is contributed by Arg-79. A helical membrane pass occupies residues 109–129 (GSPSGHCMITGAALWPIMTAV). The active-site Proton donor is His-114. Residues 130-140 (SSQMATRAHSR) lie on the Cytoplasmic side of the membrane. The helical transmembrane segment at 141 to 162 (WVRVIPSLAYCTFLLAVGLSRV) threads the bilayer. Residue Arg-161 coordinates substrate. Over 163–167 (FLLAH) the chain is Lumenal. The active-site Nucleophile is the His-167. A helical transmembrane segment spans residues 168–186 (FPHQVLAGLITGAVLGWLM). At 187–197 (TPQVPMERELS) the chain is on the cytoplasmic side. The helical transmembrane segment at 198-218 (FYGLTSLALLLGASLIYWTLF) threads the bilayer. Topologically, residues 219-254 (TLGLDLSWSINLASKWCERPEWVHLDSRPFASLSRD) are lumenal. A helical membrane pass occupies residues 255–273 (SGAALGLGIALHSPCYAQV). At 274 to 283 (RRAHLGYGQK) the chain is on the cytoplasmic side. Residues 284–304 (LVCLVLAMGLLGPLNWLGYPP) traverse the membrane as a helical segment. Residues 305-307 (QIS) are Lumenal-facing. Residues 308–328 (LFYIFNFLKYTLWPCLVLALV) form a helical membrane-spanning segment. Residues 329-346 (PWLVHMFSAQEAPPIRSS) lie on the Cytoplasmic side of the membrane.

Belongs to the glucose-6-phosphatase family.

It is found in the endoplasmic reticulum membrane. It carries out the reaction D-glucose 6-phosphate + H2O = D-glucose + phosphate. Its pathway is carbohydrate biosynthesis; gluconeogenesis. Its activity is regulated as follows. Inhibited by vanadate. In terms of biological role, hydrolyzes glucose-6-phosphate to glucose in the endoplasmic reticulum. May form with the glucose-6-phosphate transporter (SLC37A4/G6PT) a ubiquitously expressed complex responsible for glucose production through glycogenolysis and gluconeogenesis. Probably required for normal neutrophil function. This is Glucose-6-phosphatase 3 (G6PC3) from Bos taurus (Bovine).